The primary structure comprises 400 residues: Acetate kinase (400 aa).

Asn-10 serves as a coordination point for Mg(2+). Lys-17 is a binding site for ATP. Arg-91 serves as a coordination point for substrate. The Proton donor/acceptor role is filled by Asp-150. ATP-binding positions include 210–214 (HLGNG), 285–287 (DCR), and 333–337 (GIGEN). Glu-387 serves as a coordination point for Mg(2+).

This sequence belongs to the acetokinase family. In terms of assembly, homodimer. Requires Mg(2+) as cofactor. Mn(2+) is required as a cofactor.

It is found in the cytoplasm. It carries out the reaction acetate + ATP = acetyl phosphate + ADP. It functions in the pathway metabolic intermediate biosynthesis; acetyl-CoA biosynthesis; acetyl-CoA from acetate: step 1/2. Catalyzes the formation of acetyl phosphate from acetate and ATP. Can also catalyze the reverse reaction. This is Acetate kinase from Erwinia tasmaniensis (strain DSM 17950 / CFBP 7177 / CIP 109463 / NCPPB 4357 / Et1/99).